Consider the following 383-residue polypeptide: L-lactate dehydrogenase (383 aa).

Positions 1-380 (MIIASTFDYR…TCESLVNTDA (380 aa)) constitute an FMN hydroxy acid dehydrogenase domain. A substrate-binding site is contributed by Y24. S106 and Q127 together coordinate FMN. Position 129 (Y129) interacts with substrate. T155 is an FMN binding site. Substrate is bound at residue R164. FMN is bound at residue K251. H275 serves as the catalytic Proton acceptor. R278 provides a ligand contact to substrate. An FMN-binding site is contributed by 306–330 (DSGVRSGLDVVRMIAQGADAVMIGR).

The protein belongs to the FMN-dependent alpha-hydroxy acid dehydrogenase family. FMN serves as cofactor.

Its subcellular location is the cell inner membrane. It catalyses the reaction (S)-lactate + A = pyruvate + AH2. Catalyzes the conversion of L-lactate to pyruvate. Is coupled to the respiratory chain. The sequence is that of L-lactate dehydrogenase from Bartonella tribocorum (strain CIP 105476 / IBS 506).